Reading from the N-terminus, the 230-residue chain is MPVRILVVDDDRAVRESLRRSLSFNGYSVELAQDGVEALDLIANNRPDAVVLDVMMPRLDGLEVCRQLRSTGDDLPILVLTARDSVSERVAGLDAGADDYLPKPFALEELLARMRALLRRTSPDEGPDSPALTFLDLTLDPVTREVTRGSRQISLTRTEFALLEMLIANPRRVLTRSRILEEVWGFDFPTSGNALEVYIGYLRRKTEASGEPRLIHTVRGVGYVLRETPP.

The Response regulatory domain occupies 4 to 118 (RILVVDDDRA…ELLARMRALL (115 aa)). D48 bears the 4-aspartylphosphate mark. Positions 129-227 (SPALTFLDLT…VRGVGYVLRE (99 aa)) form a DNA-binding region, ompR/PhoB-type.

Phosphorylated and dephosphorylated by MprB.

It is found in the cytoplasm. Member of the two-component regulatory system MprB/MprA which contributes to maintaining a balance among several systems involved in stress resistance and is required for establishment and maintenance of persistent infection in the host. Functions as a transcriptional regulator that recognizes a 19-bp nucleotide motif comprizing two loosely conserved 8-bp direct DNA-binding motif repeats separated by a 3-bp spacer region. This chain is Response regulator MprA (mprA), found in Mycobacterium sp. (strain JLS).